A 288-amino-acid polypeptide reads, in one-letter code: ATP synthase gamma chain (288 aa).

The protein belongs to the ATPase gamma chain family. In terms of assembly, F-type ATPases have 2 components, CF(1) - the catalytic core - and CF(0) - the membrane proton channel. CF(1) has five subunits: alpha(3), beta(3), gamma(1), delta(1), epsilon(1). CF(0) has three main subunits: a, b and c.

The protein resides in the cell inner membrane. Produces ATP from ADP in the presence of a proton gradient across the membrane. The gamma chain is believed to be important in regulating ATPase activity and the flow of protons through the CF(0) complex. This Acidovorax ebreus (strain TPSY) (Diaphorobacter sp. (strain TPSY)) protein is ATP synthase gamma chain.